A 199-amino-acid polypeptide reads, in one-letter code: MKKVLVINSSVSQLNNSDSLAMSNMFIEEYKKMNPNDEIINLDLNETKMSQKTLTRNNIAEYFNQEDSFDFIEQLKSVDKIVLNFSMVNWGIPAILKNYIDHITIANLTFTYKGSTDGNAIGLLSNIQDVQILATKGGTGTPNSAFTEYVKNIWEFLGAKVKSEIIINEMMDIPPYAEQSPIENLEKVKEQILKAAKNF.

Residues Ser10, 17-19, and 135-138 each bind FMN; these read SDS and TKGG.

Belongs to the azoreductase type 1 family. Homodimer. Requires FMN as cofactor.

The enzyme catalyses 2 a quinone + NADH + H(+) = 2 a 1,4-benzosemiquinone + NAD(+). The catalysed reaction is N,N-dimethyl-1,4-phenylenediamine + anthranilate + 2 NAD(+) = 2-(4-dimethylaminophenyl)diazenylbenzoate + 2 NADH + 2 H(+). Functionally, quinone reductase that provides resistance to thiol-specific stress caused by electrophilic quinones. Also exhibits azoreductase activity. Catalyzes the reductive cleavage of the azo bond in aromatic azo compounds to the corresponding amines. The sequence is that of FMN-dependent NADH:quinone oxidoreductase 2 from Mesoplasma florum (strain ATCC 33453 / NBRC 100688 / NCTC 11704 / L1) (Acholeplasma florum).